The following is an 84-amino-acid chain: Small ribosomal subunit protein bS16c (84 aa).

Belongs to the bacterial ribosomal protein bS16 family.

It is found in the plastid. The protein resides in the chloroplast. The sequence is that of Small ribosomal subunit protein bS16c from Mesostigma viride (Green alga).